The following is a 1232-amino-acid chain: uncharacterized protein (1232 aa).

The protein belongs to the Mg-chelatase subunit H family.

This is an uncharacterized protein from Methanocaldococcus jannaschii (strain ATCC 43067 / DSM 2661 / JAL-1 / JCM 10045 / NBRC 100440) (Methanococcus jannaschii).